The sequence spans 158 residues: Transcriptional repressor NrdR (158 aa).

The disordered stretch occupies residues 1–22 (MRCPYCGSEDTQVKDSRPAEDN). Residues 3–34 (CPYCGSEDTQVKDSRPAEDNTSIRRRRICPDC) fold into a zinc finger. The segment covering 11 to 22 (TQVKDSRPAEDN) has biased composition (basic and acidic residues). The region spanning 49-139 (LMVIKKTGRK…VYRDFSHAED (91 aa)) is the ATP-cone domain.

The protein belongs to the NrdR family. Zn(2+) is required as a cofactor.

In terms of biological role, negatively regulates transcription of bacterial ribonucleotide reductase nrd genes and operons by binding to NrdR-boxes. The sequence is that of Transcriptional repressor NrdR from Rhizobium rhizogenes (strain K84 / ATCC BAA-868) (Agrobacterium radiobacter).